Here is a 617-residue protein sequence, read N- to C-terminus: Proline--tRNA ligase (617 aa).

The protein belongs to the class-II aminoacyl-tRNA synthetase family. ProS type 1 subfamily. Homodimer.

The protein resides in the cytoplasm. It catalyses the reaction tRNA(Pro) + L-proline + ATP = L-prolyl-tRNA(Pro) + AMP + diphosphate. In terms of biological role, catalyzes the attachment of proline to tRNA(Pro) in a two-step reaction: proline is first activated by ATP to form Pro-AMP and then transferred to the acceptor end of tRNA(Pro). As ProRS can inadvertently accommodate and process non-cognate amino acids such as alanine and cysteine, to avoid such errors it has two additional distinct editing activities against alanine. One activity is designated as 'pretransfer' editing and involves the tRNA(Pro)-independent hydrolysis of activated Ala-AMP. The other activity is designated 'posttransfer' editing and involves deacylation of mischarged Ala-tRNA(Pro). The misacylated Cys-tRNA(Pro) is not edited by ProRS. This is Proline--tRNA ligase from Streptococcus pneumoniae (strain P1031).